Here is a 156-residue protein sequence, read N- to C-terminus: MRNSEKQDNLVRAFKALLKEESFGSQGEIVDALKQQGFESINQSKVSRMLTKFGAVRTRNAKMEMVYCLPAELGVPTVSSSLRELVLDIDHNAALVVIHTGPGAAQLIARLLDSLGKSEGILGVVAGDDTIFITPTMPVSTEQLFKSVCELFEYTG.

This sequence belongs to the ArgR family.

It is found in the cytoplasm. Its pathway is amino-acid biosynthesis; L-arginine biosynthesis [regulation]. Its function is as follows. Regulates arginine biosynthesis genes. In Vibrio campbellii (strain ATCC BAA-1116), this protein is Arginine repressor.